The chain runs to 499 residues: Interleukin-17 receptor B (499 aa).

Positions 1–17 (MLLVLLILAASCRSALP) are cleaved as a signal peptide. At 18–286 (REPTIQCGSE…PDDNRRMLGG (269 aa)) the chain is on the extracellular side. N-linked (GlcNAc...) asparagine glycosylation is found at Asn67, Asn103, Asn156, and Asn197. The chain crosses the membrane as a helical span at residues 287–307 (WLPLFLVLLVAVWVLAAGIYL). At 308–499 (TWRQGRSTKT…QACHDSCSPL (192 aa)) the chain is on the cytoplasmic side. The 147-residue stretch at 328-474 (LIKVLVVYPS…LMKDATAFHT (147 aa)) folds into the SEFIR domain.

As to quaternary structure, interacts with DAZAP2. Interacts with TRAF3IP2. Liver and testis. Expressed at lower level in kidney and lung. Expressed in selected T-cell, B-cell and myeloid cell lines.

Its subcellular location is the cell membrane. It is found in the secreted. Its function is as follows. Receptor for the pro-inflammatory cytokines IL17B and IL17E. May play a role in controlling the growth and/or differentiation of hematopoietic cells. The sequence is that of Interleukin-17 receptor B (Il17rb) from Mus musculus (Mouse).